The primary structure comprises 165 residues: uncharacterized protein (165 aa).

The interval 53–123 is disordered; the sequence is CSEKTGSAPN…PAPSSGRQGG (71 aa). Low complexity predominate over residues 58–71; sequence GSAPNPGSSAPAPA.

This is an uncharacterized protein from Treponema pallidum (strain Nichols).